The chain runs to 583 residues: RuBisCO large subunit-binding protein subunit alpha, chloroplastic (583 aa).

A compositionally biased stretch (polar residues) spans 1–14 (MATANALSSPSVLC). Residues 1 to 35 (MATANALSSPSVLCSSRQGKLSGGSQQKGQRVSYR) form a disordered region. The N-terminal 45 residues, 1–45 (MATANALSSPSVLCSSRQGKLSGGSQQKGQRVSYRKANRRFSLRA), are a transit peptide targeting the chloroplast. Residues 15 to 31 (SSRQGKLSGGSQQKGQR) show a composition bias toward low complexity. S89 is modified (phosphoserine).

Belongs to the chaperonin (HSP60) family. Oligomer of probably six alpha and six beta subunits.

The protein localises to the plastid. Its subcellular location is the chloroplast. This protein binds RuBisCO small and large subunits and is implicated in the assembly of the enzyme oligomer. The chain is RuBisCO large subunit-binding protein subunit alpha, chloroplastic from Brassica napus (Rape).